A 375-amino-acid chain; its full sequence is MSCPVIELTQQLIRRPSLSPDDAGCQALMIERLRAIGFTVERMDFGDTQNFWAWRGQGETLAFAGHTDVVPAGDADRWINPPFEPTIRDGMLFGRGAADMKGSLAAMVVAAERFVAQHPNHKNRLAFLITSDEEASAKNGTVRVVETLMERHERLDYCLVGEPSSTEVVGDVVKNGRRGSLTCNLTIHGVQGHVAYPHLADNPVHRAAPMLNELVNIEWDKGNEFFPPTSMQIANLQAGTGSNNVIPGDFSVQFNFRFSTELTDEMIKSRVVALLEKYELRYSVDWWLSGQPFLTQRGKLVDAVVNAIAHYNEIKPQLLTTGGTSDGRFIARMGAQVVELGPVNATIHKINECVNAADLQLLARMYQRIMEQLVA.

His66 contacts Zn(2+). Asp68 is a catalytic residue. Asp99 serves as a coordination point for Zn(2+). Residue Glu133 is the Proton acceptor of the active site. Residues Glu134, Glu162, and His348 each coordinate Zn(2+).

This sequence belongs to the peptidase M20A family. DapE subfamily. As to quaternary structure, homodimer. The cofactor is Zn(2+). It depends on Co(2+) as a cofactor.

It catalyses the reaction N-succinyl-(2S,6S)-2,6-diaminopimelate + H2O = (2S,6S)-2,6-diaminopimelate + succinate. Its pathway is amino-acid biosynthesis; L-lysine biosynthesis via DAP pathway; LL-2,6-diaminopimelate from (S)-tetrahydrodipicolinate (succinylase route): step 3/3. Catalyzes the hydrolysis of N-succinyl-L,L-diaminopimelic acid (SDAP), forming succinate and LL-2,6-diaminopimelate (DAP), an intermediate involved in the bacterial biosynthesis of lysine and meso-diaminopimelic acid, an essential component of bacterial cell walls. The chain is Succinyl-diaminopimelate desuccinylase from Enterobacter sp. (strain 638).